An 805-amino-acid polypeptide reads, in one-letter code: Angiotensin-converting enzyme 2 (805 aa).

The N-terminal stretch at 1-17 (MSSSSWLLLSLVAVTAA) is a signal peptide. The Extracellular segment spans residues 18 to 740 (QSTIEEQAKT…LGPPNQPPVS (723 aa)). In terms of domain architecture, Peptidase M2 spans 19-607 (STIEEQAKTF…QNKNSFVGWS (589 aa)). The segment at 30–41 (DKFNHEAEDLFY) is interaction with SARS-CoV spike glycoprotein. N53 carries an N-linked (GlcNAc...) asparagine glycan. The interaction with SARS-CoV spike glycoprotein stretch occupies residues 82–84 (MYP). 2 N-linked (GlcNAc...) asparagine glycosylation sites follow: N90 and N103. Cysteines 133 and 141 form a disulfide. R169 contacts chloride. R273 provides a ligand contact to substrate. N322 carries an N-linked (GlcNAc...) asparagine glycan. The cysteines at positions 344 and 361 are disulfide-linked. 345 to 346 (HP) contributes to the substrate binding site. Residues 353–357 (KGDFR) form an interaction with SARS-CoV spike glycoprotein region. H374 contacts Zn(2+). Catalysis depends on E375, which acts as the Proton acceptor. Zn(2+)-binding residues include H378 and E402. A glycan (N-linked (GlcNAc...) asparagine) is linked at N432. 2 residues coordinate chloride: W477 and K481. H505 functions as the Proton donor in the catalytic mechanism. Residue Y515 participates in substrate binding. An intrachain disulfide couples C530 to C542. Residue N546 is glycosylated (N-linked (GlcNAc...) asparagine). One can recognise a Collectrin-like domain in the interval 614–805 (ADQSIKVRIS…QNTDDVQTSF (192 aa)). Residues 652 to 659 (RQYFLKVK) form an essential for cleavage by ADAM17 region. The N-linked (GlcNAc...) asparagine glycan is linked to N690. The tract at residues 697 to 716 (RTEVEKAIRMSRSRINDAFR) is essential for cleavage by TMPRSS11D and TMPRSS2. The helical transmembrane segment at 741–761 (IWLIVFGVVMGVIVVGIVILI) threads the bilayer. Residues 762 to 805 (FTGIRDRKKKNKARSGENPYASIDISKGENNPGFQNTDDVQTSF) are Cytoplasmic-facing. The interval 772 to 805 (NKARSGENPYASIDISKGENNPGFQNTDDVQTSF) is disordered. The LIR motif lies at 778–786 (ENPYASIDI). The residue at position 781 (Y781) is a Phosphotyrosine. Residues 781–784 (YASI) carry the Endocytic sorting signal motif. The SH2-binding signature appears at 781–785 (YASID). S783 carries the phosphoserine modification. K788 is covalently cross-linked (Glycyl lysine isopeptide (Lys-Gly) (interchain with G-Cter in ubiquitin)). The segment covering 789 to 805 (GENNPGFQNTDDVQTSF) has biased composition (polar residues). Positions 792-795 (NPGF) match the PTB motif. The PDZ-binding signature appears at 803-805 (TSF).

Belongs to the peptidase M2 family. Homodimer. Interacts with the catalytically active form of TMPRSS2. Interacts with SLC6A19; this interaction is essential for expression and function of SLC6A19 in intestine. Interacts with ITGA5:ITGB1. Probably interacts (via endocytic sorting signal motif) with AP2M1; the interaction is inhibited by phosphorylation of Tyr-781. Interacts (via PDZ-binding motif) with NHERF1 (via PDZ domains); the interaction may enhance ACE2 membrane residence. As to quaternary structure, (Microbial infection) Interacts with SARS coronavirus/SARS-CoV spike protein. In terms of assembly, (Microbial infection) Interacts with SARS coronavirus-2/SARS-CoV-2 spike protein (via RBD domain). (Microbial infection) Interacts with human coronavirus NL63 spike protein. As to quaternary structure, (Microbial infection) Interacts with human coronavirus NL63/HCoV-NL63 spike glycoprotein. In terms of assembly, (Microbial infection) Interacts with SARS coronavirus-2/SARS-CoV-2 spike protein; the interaction is increased by AVP/Arg-vasopressin with which they may form a complex. Zn(2+) is required as a cofactor. Requires chloride as cofactor. Post-translationally, N-glycosylation on Asn-90 may limit SARS infectivity. Proteolytic cleavage by ADAM17 generates a secreted form. Also cleaved by serine proteases: TMPRSS2, TMPRSS11D and HPN/TMPRSS1. In terms of processing, phosphorylated. Phosphorylation at Tyr-781 probably inhibits interaction with AP2M1 and enables interactions with proteins containing SH2 domains. Post-translationally, ubiquitinated. Ubiquitinated on Lys-788 via 'Lys-48'-linked ubiquitin. 'Lys-48'-linked deubiquitinated by USP50 on the Lys-788; leading to its stabilization. In terms of tissue distribution, expressed in endothelial cells from small and large arteries, and in arterial smooth muscle cells (at protein level). Expressed in enterocytes of the small intestine, Leydig cells and Sertoli cells (at protein level). Expressed in the renal proximal tubule and the small intestine (at protein level). Expressed in heart, kidney, testis, and gastrointestinal system (at protein level). In lung, expressed at low levels in some alveolar type 2 cells, the expression seems to be individual-specific (at protein level). Expressed in nasal epithelial cells (at protein level). Coexpressed with TMPRSS2 within some lung alveolar type 2 cells, ileal absorptive enterocytes, intestinal epithelial cells, cornea, gallbladder and nasal goblet secretory cells. Coexpressed with TMPRSS4 within mature enterocytes. Expressed in nasal and bronchial epithelial cells (at protein level).

Its subcellular location is the secreted. The protein resides in the cell membrane. It localises to the cytoplasm. The protein localises to the cell projection. It is found in the cilium. Its subcellular location is the apical cell membrane. It catalyses the reaction angiotensin II + H2O = angiotensin-(1-7) + L-phenylalanine. The catalysed reaction is angiotensin I + H2O = angiotensin-(1-9) + L-leucine. It carries out the reaction bradykinin(1-8) + H2O = bradykinin(1-7) + L-phenylalanine. The enzyme catalyses neurotensin + H2O = neurotensin-(1-12) + L-leucine. It catalyses the reaction neurotensin-(1-8) + H2O = neurotensin-(1-7) + L-arginine. The catalysed reaction is kinetensin + H2O = kinetensin-(1-8) + L-leucine. It carries out the reaction dynorphin A-(1-13) + H2O = dynorphin A-(1-12) + L-lysine. The enzyme catalyses apelin-13 + H2O = apelin-12 + L-phenylalanine. It catalyses the reaction [Pyr1]apelin-13 + H2O = [Pyr1]apelin-12 + L-phenylalanine. The catalysed reaction is apelin-17 + H2O = apelin-16 + L-phenylalanine. It carries out the reaction beta-casomorphin-7 + H2O = beta-casomorphin-6 + L-isoleucine. The enzyme catalyses neocasomorphin + H2O = neocasomorphin-(1-5) + L-isoleucine. With respect to regulation, regulated by chloride and fluoride, but not bromide. Chloride increases angiotensin I and decreases angiotensin II cleavage. Inhibited by MLN-4760, cFP_Leu, and EDTA, but not by the ACE inhibitors lisinopril, captopril and enalaprilat. Highly potent and selective in vitro ACE2 inhibitors were identified. Essential counter-regulatory carboxypeptidase of the renin-angiotensin hormone system that is a critical regulator of blood volume, systemic vascular resistance, and thus cardiovascular homeostasis. Converts angiotensin I to angiotensin 1-9, a nine-amino acid peptide with anti-hypertrophic effects in cardiomyocytes, and angiotensin II to angiotensin 1-7, which then acts as a beneficial vasodilator and anti-proliferation agent, counterbalancing the actions of the vasoconstrictor angiotensin II. Also removes the C-terminal residue from three other vasoactive peptides, neurotensin, kinetensin, and des-Arg bradykinin, but is not active on bradykinin. Also cleaves other biological peptides, such as apelins (apelin-13, [Pyr1]apelin-13, apelin-17, apelin-36), casomorphins (beta-casomorphin-7, neocasomorphin) and dynorphin A with high efficiency. In addition, ACE2 C-terminus is homologous to collectrin and is responsible for the trafficking of the neutral amino acid transporter SL6A19 to the plasma membrane of gut epithelial cells via direct interaction, regulating its expression on the cell surface and its catalytic activity. Its function is as follows. (Microbial infection) Acts as a receptor for human coronaviruses SARS-CoV and SARS-CoV-2, as well as human coronavirus NL63/HCoV-NL63. Functionally, non-functional as a carboxypeptidase. In terms of biological role, (Microbial infection) Non-functional as a receptor for human coronavirus SARS-CoV-2. The sequence is that of Angiotensin-converting enzyme 2 from Homo sapiens (Human).